Here is a 283-residue protein sequence, read N- to C-terminus: Bifunctional protein FolD (283 aa).

NADP(+) is bound by residues 166-168, serine 191, and threonine 232; that span reads GRS.

It belongs to the tetrahydrofolate dehydrogenase/cyclohydrolase family. As to quaternary structure, homodimer.

It catalyses the reaction (6R)-5,10-methylene-5,6,7,8-tetrahydrofolate + NADP(+) = (6R)-5,10-methenyltetrahydrofolate + NADPH. The enzyme catalyses (6R)-5,10-methenyltetrahydrofolate + H2O = (6R)-10-formyltetrahydrofolate + H(+). It participates in one-carbon metabolism; tetrahydrofolate interconversion. Catalyzes the oxidation of 5,10-methylenetetrahydrofolate to 5,10-methenyltetrahydrofolate and then the hydrolysis of 5,10-methenyltetrahydrofolate to 10-formyltetrahydrofolate. The chain is Bifunctional protein FolD from Halothermothrix orenii (strain H 168 / OCM 544 / DSM 9562).